A 490-amino-acid chain; its full sequence is MSISSVIKSLQDIMRKDAGVDGDAQRLGQLSWLLFLKIFDTQEEELELEQDDYQFPIPQRYLWRSWAANSEGITGDALLEFVNDDLFPTLKNLTAPIDKNPRGFVVKQAFSDAYNYMKNGTLLRQVINKLNEIDFSSSQERHLFGDIYEQILRDLQSAGNAGEFYTPRAVTRFMVNRIDPKLGESIMDPACGTGGFLACAFDHVKDNYVKTTEDHKTLQQQIYGVEKKQLPHLLCTTNMLLHGIEVPVQIRHDNTLNKPLSSWDEQVDVIVTNPPFGGTEEDGIEKNFPAEMQTRETADLFLQLIIEVLADKGRAAVVLPDGTLFGEGVKTKIKKLLTEECNLHTIVRLPNGVFNPYTGIKTNILFFTKGQPTKEVWFYEHPYPDGVKNYSKTKPMKFEEFQAEIDWWGNEADDFASREENNQAWKVGIDDIIARNFNLDIKNPYQGETISHDPDELLAQYQTQQAEIGELRNQLRDILGAALAGNKGAN.

S-adenosyl-L-methionine-binding positions include 163–168 (EFYTPR), 193–195 (TGG), and glutamate 226.

This sequence belongs to the N(4)/N(6)-methyltransferase family. As to quaternary structure, the type I restriction/modification system is composed of three polypeptides R, M and S; the restriction enzyme has stoichiometry R(2)M(2)S(1) while the methyltransferase is M(2)S(1).

The enzyme catalyses a 2'-deoxyadenosine in DNA + S-adenosyl-L-methionine = an N(6)-methyl-2'-deoxyadenosine in DNA + S-adenosyl-L-homocysteine + H(+). Its function is as follows. The subtype gamma methyltransferase (M) subunit of a type I restriction enzyme. The M and S subunits together form a methyltransferase (MTase) that methylates two adenine residues of the sequence 5'-GAGN(7)ATGC-3'. In the presence of the R subunit the complex can also act as an endonuclease, binding to the same target sequence but cutting the DNA some distance from this site. Whether the DNA is cut or modified depends on the methylation state of the target sequence. When the target site is unmodified, the DNA is cut. When the target site is hemimethylated, the complex acts as a maintenance MTase modifying the DNA so that both strands become methylated. After locating a non-methylated recognition site, the enzyme complex serves as a molecular motor that translocates DNA in an ATP-dependent manner until a collision occurs that triggers cleavage. This chain is Type I restriction enzyme EcoEI methylase subunit (hsdM), found in Escherichia coli.